A 256-amino-acid polypeptide reads, in one-letter code: 5'-nucleotidase SurE (256 aa).

A divalent metal cation-binding residues include aspartate 8, aspartate 9, serine 40, and asparagine 92.

Belongs to the SurE nucleotidase family. It depends on a divalent metal cation as a cofactor.

Its subcellular location is the cytoplasm. The catalysed reaction is a ribonucleoside 5'-phosphate + H2O = a ribonucleoside + phosphate. Its function is as follows. Nucleotidase that shows phosphatase activity on nucleoside 5'-monophosphates. The polypeptide is 5'-nucleotidase SurE (Sinorhizobium medicae (strain WSM419) (Ensifer medicae)).